The primary structure comprises 122 residues: MIQVESRLEVADNTGAKSVLCIKVLGGSKRRYASVGDVIKVSIKEAAPRGRVKKGEIYSAVVVRTAKGIRRSDGSLVKFDGNAAVLLNAKLEPIGTRIFGPVTRELRTEKFMKIVSLAPEVL.

The protein belongs to the universal ribosomal protein uL14 family. As to quaternary structure, part of the 50S ribosomal subunit. Forms a cluster with proteins L3 and L19. In the 70S ribosome, L14 and L19 interact and together make contacts with the 16S rRNA in bridges B5 and B8.

In terms of biological role, binds to 23S rRNA. Forms part of two intersubunit bridges in the 70S ribosome. This Albidiferax ferrireducens (strain ATCC BAA-621 / DSM 15236 / T118) (Rhodoferax ferrireducens) protein is Large ribosomal subunit protein uL14.